The primary structure comprises 393 residues: 5-amino-6-(D-ribitylamino)uracil--L-tyrosine 4-hydroxyphenyl transferase (393 aa).

Residues 67–322 enclose the Radical SAM core domain; the sequence is VTYVINRNIN…GQWIVNHQPS (256 aa). Positions 81, 85, and 88 each coordinate [4Fe-4S] cluster.

It belongs to the radical SAM superfamily. CofH family. As to quaternary structure, consists of two subunits, CofG and CofH. The cofactor is [4Fe-4S] cluster.

The catalysed reaction is 5-amino-6-(D-ribitylamino)uracil + L-tyrosine + S-adenosyl-L-methionine = 5-amino-5-(4-hydroxybenzyl)-6-(D-ribitylimino)-5,6-dihydrouracil + 2-iminoacetate + 5'-deoxyadenosine + L-methionine + H(+). Its pathway is cofactor biosynthesis; coenzyme F0 biosynthesis. Functionally, catalyzes the radical-mediated synthesis of 5-amino-5-(4-hydroxybenzyl)-6-(D-ribitylimino)-5,6-dihydrouracil from 5-amino-6-(D-ribitylamino)uracil and L-tyrosine. The sequence is that of 5-amino-6-(D-ribitylamino)uracil--L-tyrosine 4-hydroxyphenyl transferase from Thermosynechococcus vestitus (strain NIES-2133 / IAM M-273 / BP-1).